The chain runs to 458 residues: Sphingoid long chain base kinase 4 (458 aa).

Residues lysine 103–glycine 241 form the DAGKc domain. Residues asparagine 113 to histidine 115 and threonine 145 each bind ATP. A substrate-binding site is contributed by glycine 170 to glycine 173. The active-site Proton donor/acceptor is the aspartate 172. Residues glutamate 177, glycine 202–glycine 204, arginine 266, arginine 272, and aspartate 426–glutamate 428 contribute to the ATP site.

It is found in the cell membrane. The protein localises to the endoplasmic reticulum membrane. It localises to the late endosome membrane. Its subcellular location is the golgi apparatus membrane. The catalysed reaction is a sphingoid base + ATP = a sphingoid 1-phosphate + ADP + H(+). Functionally, catalyzes the phosphorylation of the sphingoid long chain bases dihydrosphingosine (DHS) and phytosphingosine (PHS) to form dihydrosphingosine 1-phosphate (DHS-1P) and phytosphingosine 1-phosphate (PHS-1P) respectively. Involved in the biosynthesis of sphingolipids and ceramides. Involved in heat-induced transient cell cycle arrest. Accumulation of phosphorylated sphingoid long chain bases (LCBPs) stimulates calcium influx and activates calcineurin signaling. Involved in heat-stress resistance. The protein is Sphingoid long chain base kinase 4 (lcb4) of Schizosaccharomyces pombe (strain 972 / ATCC 24843) (Fission yeast).